A 152-amino-acid polypeptide reads, in one-letter code: Ribosome maturation factor RimP (152 aa).

Belongs to the RimP family.

It is found in the cytoplasm. Its function is as follows. Required for maturation of 30S ribosomal subunits. This chain is Ribosome maturation factor RimP, found in Pseudomonas aeruginosa (strain LESB58).